Reading from the N-terminus, the 1016-residue chain is Kinesin-like protein KIN-14K (1016 aa).

Residues 14 to 121 (ADRRAEVIEW…CLLVLRESVS (108 aa)) enclose the Calponin-homology (CH) domain. Positions 123 to 176 (GLRDGTSKAPLRKKWRVPETGEPLVPGVAQGKTSPGEDKRNGLPDPKSQQKTPI) are disordered. Positions 288 to 354 (VNGTNEENQM…EVMTSMHEQQ (67 aa)) form a coiled coil. Residues 481–808 (NIRVYCRVRP…LKFAERVSGV (328 aa)) enclose the Kinesin motor domain. ATP is bound at residue 565 to 572 (GQTGSGKT). Residues 820-852 (KDIKELLEQVASLKDTIVRKDTEIEQLQLMKDK) adopt a coiled-coil conformation. Composition is skewed to polar residues over residues 884-893 (NQQSQLSDPQ) and 990-1004 (KTPN…QLIG). Disordered stretches follow at residues 884 to 912 (NQQS…DITP) and 971 to 1016 (LTKN…RWQK).

This sequence belongs to the TRAFAC class myosin-kinesin ATPase superfamily. Kinesin family. KIN-14 subfamily.

The protein is Kinesin-like protein KIN-14K of Oryza sativa subsp. japonica (Rice).